The sequence spans 473 residues: ATP synthase subunit beta 2 (473 aa).

158-165 (GGAGVGKT) provides a ligand contact to ATP.

Belongs to the ATPase alpha/beta chains family. In terms of assembly, F-type ATPases have 2 components, CF(1) - the catalytic core - and CF(0) - the membrane proton channel. CF(1) has five subunits: alpha(3), beta(3), gamma(1), delta(1), epsilon(1). CF(0) has three main subunits: a(1), b(2) and c(9-12). The alpha and beta chains form an alternating ring which encloses part of the gamma chain. CF(1) is attached to CF(0) by a central stalk formed by the gamma and epsilon chains, while a peripheral stalk is formed by the delta and b chains.

The protein resides in the cell membrane. It carries out the reaction ATP + H2O + 4 H(+)(in) = ADP + phosphate + 5 H(+)(out). Produces ATP from ADP in the presence of a proton gradient across the membrane. The catalytic sites are hosted primarily by the beta subunits. The protein is ATP synthase subunit beta 2 of Listeria monocytogenes serotype 4b (strain F2365).